The primary structure comprises 391 residues: DNA/RNA-binding protein KIN17 (391 aa).

The C2H2-type zinc finger occupies 28–50 (CQMCQKQCRDENGFKCHCMSESH). The segment at 51–160 (QRQLLLASEN…RQLELEKKKK (110 aa)) is winged helix-turn-helix (wHTH). Lys135 carries the N6,N6,N6-trimethyllysine; by METTL22; alternate modification. Residue Lys135 is modified to N6-methyllysine; alternate. Coiled coils occupy residues 147–180 (ETIR…VRRG) and 252–275 (AKKK…TART). Residues 206–258 (NLNKGAGGSAGATTSKSSSLGPSALKLLGSAASGKRKESSQSSAQPAKKKKSA) are disordered. Positions 282 to 332 (GIVVKIITKKLGEKYHKKKGVVKEVIDRYTAVVKMTDSGDRLKLDQTHLET) are C-terminal subdomain A. Residues 338-389 (GKRVLVLNGGYRGNEGTLESINEKAFSATIVIETGPLKGRRVEGIQYEDISK) are C-terminal subdomain B.

Belongs to the KIN17 family. As to quaternary structure, associated with DNA polymerase alpha, RFC1 and cyclin A, in multiprotein DNA replication complexes. Also associates with replication origins at the G1/S phase boundary and throughout the S phase in vivo. Highly expressed in transformed mouse AtT20 neuroendocrine cells. Expressed at a lower level in testis, kidney, skeletal muscle, liver, lung, spleen, brain and heart and kidney. In testis, expressed at much higher levels in proliferating cells than in differentiating cells. Not detected in embryo.

It is found in the nucleus. Its subcellular location is the cytoplasm. In terms of biological role, involved in DNA replication and the cellular response to DNA damage. May participate in DNA replication factories and create a bridge between DNA replication and repair mediated by high molecular weight complexes. May play a role in illegitimate recombination and regulation of gene expression. May participate in mRNA processing. Binds, in vitro, to double-stranded DNA. Also shown to bind preferentially to curved DNA in vitro and in vivo. Binds via its C-terminal domain to RNA in vitro. In Mus musculus (Mouse), this protein is DNA/RNA-binding protein KIN17.